Consider the following 362-residue polypeptide: MKGLILVGGYGTRLRPLTLTLPKPLVEFGNRPMILHQIEALAAAGVTDIVLAVNYRPEVMVSTLKKYEEEYGVSITFSVEEEPLGTAGPLKLAEEVLKKDDSPFFVLNSDVICDYPFKELADFHKAHGAAGTIVATKVDEPSKYGVIVHDRDTPNLIDRFVEKPVEFVGNRINAGLYILNPSVIDLIEMRPTSIEKETFPILVEQKQLYSFDLEGYWMDVGQPKDFLSGTCLYLTSLSKKHPEKLCKEKYVHGGNVLIDPTAKIHPSALIGPNVTIGPNVVVGEGARIQRSVLLANSQVKDHAWVKSTIVGWNSRIGKWARTEGVTVLGDDVEVKNEIYVNGAKVLPHKSISSNVEKESIIM.

Belongs to the transferase hexapeptide repeat family.

It is found in the cytoplasm. The catalysed reaction is alpha-D-mannose 1-phosphate + GTP + H(+) = GDP-alpha-D-mannose + diphosphate. Its pathway is nucleotide-sugar biosynthesis; GDP-alpha-D-mannose biosynthesis; GDP-alpha-D-mannose from alpha-D-mannose 1-phosphate (GTP route): step 1/1. Involved in cell wall synthesis where it is required for glycosylation. Involved in cell cycle progression through cell-size checkpoint. The polypeptide is Mannose-1-phosphate guanyltransferase (MPG1) (Candida albicans (strain SC5314 / ATCC MYA-2876) (Yeast)).